Here is a 416-residue protein sequence, read N- to C-terminus: Imidazolonepropionase (416 aa).

His78 and His80 together coordinate Fe(3+). 2 residues coordinate Zn(2+): His78 and His80. Positions 87, 150, and 183 each coordinate 4-imidazolone-5-propanoate. Tyr150 provides a ligand contact to N-formimidoyl-L-glutamate. His248 provides a ligand contact to Fe(3+). His248 lines the Zn(2+) pocket. A 4-imidazolone-5-propanoate-binding site is contributed by Gln251. A Fe(3+)-binding site is contributed by Asp323. Residue Asp323 participates in Zn(2+) binding. Residues Asn325 and Gly327 each coordinate N-formimidoyl-L-glutamate. Thr328 is a 4-imidazolone-5-propanoate binding site.

This sequence belongs to the metallo-dependent hydrolases superfamily. HutI family. Zn(2+) is required as a cofactor. The cofactor is Fe(3+).

It localises to the cytoplasm. It carries out the reaction 4-imidazolone-5-propanoate + H2O = N-formimidoyl-L-glutamate. Its pathway is amino-acid degradation; L-histidine degradation into L-glutamate; N-formimidoyl-L-glutamate from L-histidine: step 3/3. Functionally, catalyzes the hydrolytic cleavage of the carbon-nitrogen bond in imidazolone-5-propanoate to yield N-formimidoyl-L-glutamate. It is the third step in the universal histidine degradation pathway. The polypeptide is Imidazolonepropionase (Vibrio campbellii (strain ATCC BAA-1116)).